A 727-amino-acid polypeptide reads, in one-letter code: MEDSYKDRTSLMKGAKDIAREVKKQTVKKVNQAVDRAQDEYTQRSYSRFQDEEDDDDYYPAGETYNGEANDDEGSSEATEGHDEDDEIYEGEYQGIPSMNQAKDSIVSVGQPKGDEYKDRRELESERRADEEELAQQYELIIQECGHGRFQWALFFVLGMALMADGVEVFVVGFVLPSAETDLCIPNSGSGWLGSIVYLGMMVGAFFWGGLADKVGRKQSLLICMSVNGFFAFLSSFVQGYGFFLFCRLLSGFGIGGAIPTVFSYFAEVLAREKRGEHLSWLCMFWMIGGIYASAMAWAIIPHYGWSFSMGSAYQFHSWRVFVIVCALPCVSSVVALTFMPESPRFLLEVGKHDEAWMILKLIHDTNMRARGQPEKVFTVNKIKTPKQIDELIEIESDTGTWYRRCFVRIRTELYGIWLTFMRCFNYPVRDNTIKLTIVWFTLSFGYYGLSVWFPDVIKPLQSDEYALLTRNVERDKYANFTINFTMENQIHTGMEYDNGRFIGVKFKSVTFKDSVFKSCTFEDVTSVNTYFKNCTFIDTVFDNTDFEPYKFIDSEFKNCSFFHNKTGCQITFDDDYSAYWIYFVNFLGTLAVLPGNIVSALLMDRIGRLTMLGGSMVLSGISCFFLWFGTSESMMIGMLCLYNGLTISAWNSLDVVTVELYPTDRRATGFGFLNALCKAAAVLGNLIFGSLVSITKSIPILLASTVLVCGGLVGLCLPDTRTQVLM.

The segment at 1–57 (MEDSYKDRTSLMKGAKDIAREVKKQTVKKVNQAVDRAQDEYTQRSYSRFQDEEDDDD) is interaction with SYT1. Residues 1–154 (MEDSYKDRTS…CGHGRFQWAL (154 aa)) are Cytoplasmic-facing. 2 disordered regions span residues 24-84 (KQTV…GHDE) and 109-128 (VGQP…SERR). 2 positions are modified to phosphoserine: S75 and S76. A Phosphothreonine modification is found at T79. Residues 113-128 (KGDEYKDRRELESERR) are compositionally biased toward basic and acidic residues. A helical membrane pass occupies residues 155 to 175 (FFVLGMALMADGVEVFVVGFV). At 176–191 (LPSAETDLCIPNSGSG) the chain is on the extracellular side. Residues 192-212 (WLGSIVYLGMMVGAFFWGGLA) traverse the membrane as a helical segment. The Cytoplasmic portion of the chain corresponds to 213–226 (DKVGRKQSLLICMS). Residues 227 to 247 (VNGFFAFLSSFVQGYGFFLFC) traverse the membrane as a helical segment. Position 248 (R248) is a topological domain, extracellular. Residues 249–269 (LLSGFGIGGAIPTVFSYFAEV) form a helical membrane-spanning segment. Topologically, residues 270–280 (LAREKRGEHLS) are cytoplasmic. Residues 281–301 (WLCMFWMIGGIYASAMAWAII) traverse the membrane as a helical segment. At 302-320 (PHYGWSFSMGSAYQFHSWR) the chain is on the extracellular side. A helical membrane pass occupies residues 321–341 (VFVIVCALPCVSSVVALTFMP). Over 342 to 437 (ESPRFLLEVG…PVRDNTIKLT (96 aa)) the chain is Cytoplasmic. A helical membrane pass occupies residues 438 to 458 (IVWFTLSFGYYGLSVWFPDVI). Residues 459 to 578 (KPLQSDEYAL…CQITFDDDYS (120 aa)) are Extracellular-facing. Position 466 is a phosphotyrosine (Y466). 5 N-linked (GlcNAc...) asparagine glycosylation sites follow: N480, N484, N534, N559, and N565. Residues 519–563 (SCTFEDVTSVNTYFKNCTFIDTVFDNTDFEPYKFIDSEFKNCSFF) are (Microbial infection) C.botulinum neurotoxin type A-binding. A helical transmembrane segment spans residues 579–599 (AYWIYFVNFLGTLAVLPGNIV). At 600-609 (SALLMDRIGR) the chain is on the cytoplasmic side. The helical transmembrane segment at 610-630 (LTMLGGSMVLSGISCFFLWFG) threads the bilayer. Over 631–636 (TSESMM) the chain is Extracellular. A helical membrane pass occupies residues 637–657 (IGMLCLYNGLTISAWNSLDVV). The Cytoplasmic segment spans residues 658–669 (TVELYPTDRRAT). The helical transmembrane segment at 670–690 (GFGFLNALCKAAAVLGNLIFG) threads the bilayer. Residues 691–698 (SLVSITKS) are Extracellular-facing. A helical transmembrane segment spans residues 699-719 (IPILLASTVLVCGGLVGLCLP). At 720-727 (DTRTQVLM) the chain is on the cytoplasmic side.

This sequence belongs to the major facilitator superfamily. In terms of assembly, interacts with SYT1 in a calcium-dependent manner. (Microbial infection) Interacts with C.botulinum neurotoxin type A1 and type A2 (BoNT/A, botA). Interaction is improved by glycosylation of SV2. N-glycosylated. Upon expression in a kidney cell line the most abundant glycan on Asn-534 is GlcNAc(3)Hex(5), while on Asn-559 and Asn-565 the most abundant glycan is GlcNAc2Fuc1Man3GlcNAc3Gal3. Both Asn-559 and Asn-565 have a high degree of glycan heterogeneity.

The protein resides in the cytoplasmic vesicle. Its subcellular location is the secretory vesicle. It localises to the synaptic vesicle membrane. Its function is as follows. Plays a role in the control of regulated secretion in neural and endocrine cells, enhancing selectively low-frequency neurotransmission. Positively regulates vesicle fusion by maintaining the readily releasable pool of secretory vesicles. (Microbial infection) Receptor for C.botulinum neurotoxin type A (BoNT/A, botA); the toxin probably binds via extracellular loop 4. Recognition by BoNT/A relies on both protein-protein and protein-N-glycosylation; glycosylation of Asn-559 increases its affinity for BoNT/A. Also serves as a receptor for the closely related C.botulinum neurotoxin type A2; glycosylation is not essential but enhances the interaction. In terms of biological role, (Microbial infection) Possible receptor for C.botulinum neurotoxin type D (BoNT/D, botD); note that type D does not usually infect humans. This is Synaptic vesicle glycoprotein 2C (SV2C) from Homo sapiens (Human).